Reading from the N-terminus, the 241-residue chain is Trypsin-1 (241 aa).

Positions 1-13 (MKSLIFVLLLGAV) are cleaved as a signal peptide. A propeptide spans 14 to 19 (FAEEDK) (activation peptide). In terms of domain architecture, Peptidase S1 spans 20–239 (IVGGYECTKH…LSGWVRDTMA (220 aa)). Disulfide bonds link Cys-26–Cys-155, Cys-44–Cys-60, Cys-128–Cys-228, Cys-135–Cys-201, Cys-166–Cys-180, and Cys-191–Cys-215. Residues His-59 and Asp-103 each act as charge relay system in the active site. Ser-195 acts as the Charge relay system in catalysis.

This sequence belongs to the peptidase S1 family.

The protein localises to the secreted. It localises to the extracellular space. It carries out the reaction Preferential cleavage: Arg-|-Xaa, Lys-|-Xaa.. The protein is Trypsin-1 of Gadus morhua (Atlantic cod).